The primary structure comprises 311 residues: MTQEIHYSVLLKESVDALVTNADGVYIDGTFGRGGHSRAVLQKLSPQGRLLAFDKDPEAVAYGRELAGSDNRFSMVHDSFVNMASHWASAAHANNWSLSGVLLDLGVSSPQLDQAERGFSFMHDGPLDMRMDNSSGQTAAEWINTAEESELAFVIKEYGEERFARRMARAIVAEREKSPITQTLRLANIVSEANPKWEKGKHPATRAFQAIRIFINRELDDLTATLAQSLEMLPSGGRLVVISFHSLEDRIVKRFMRDQARGKQFPIGMPVTEDMLEKKLKTLGKAQRAGDRELAENIRSRSATLRVAEKL.

S-adenosyl-L-methionine contacts are provided by residues Gly34–His36, Asp54, Phe80, Asp104, and Gln111.

This sequence belongs to the methyltransferase superfamily. RsmH family.

It is found in the cytoplasm. The catalysed reaction is cytidine(1402) in 16S rRNA + S-adenosyl-L-methionine = N(4)-methylcytidine(1402) in 16S rRNA + S-adenosyl-L-homocysteine + H(+). In terms of biological role, specifically methylates the N4 position of cytidine in position 1402 (C1402) of 16S rRNA. This is Ribosomal RNA small subunit methyltransferase H from Teredinibacter turnerae (strain ATCC 39867 / T7901).